Consider the following 321-residue polypeptide: uncharacterized protein (321 aa).

Basic residues predominate over residues 1–12; sequence MSMFLKKQKKTK. Disordered stretches follow at residues 1–59 and 71–289; these read MSMF…MRKT and EDCT…GPED. Basic and acidic residues predominate over residues 50-59; the sequence is DGIKETMRKT. Residues 99–115 are compositionally biased toward acidic residues; that stretch reads DDSDSESSEDGGEDDEE. The segment covering 156-175 has biased composition (low complexity); that stretch reads SDSSSSSSSSSDSESSSSSD. Over residues 179–189 the composition is skewed to basic and acidic residues; sequence DGDRSTPEPDI. Residues 231–242 show a composition bias toward low complexity; it reads EPSPLRAAAAAA.

This is an uncharacterized protein from Equus caballus (Horse).